We begin with the raw amino-acid sequence, 251 residues long: Arginine and glutamate-rich protein 1-A (251 aa).

Basic residues predominate over residues 1–48 (MGRSRSRSSSRSKHSKHSRKRSRSKSKSKKRSRSKEPKRNRRSRSRSG). The interval 1–53 (MGRSRSRSSSRSKHSKHSRKRSRSKSKSKKRSRSKEPKRNRRSRSRSGSRRDR) is necessary and sufficient for RNA binding. 2 disordered regions span residues 1 to 92 (MGRS…ERQR) and 215 to 251 (RMKL…KATE). 3 stretches are compositionally biased toward basic and acidic residues: residues 49 to 63 (SRRD…RTDM), 71 to 92 (RNND…ERQR), and 215 to 231 (RMKL…EEQK). The necessary and sufficient for transcriptional regulation stretch occupies residues 54-251 (GGSPPDRTDM…RLSFSLKATE (198 aa)).

This sequence belongs to the ARGLU1 family.

Its subcellular location is the nucleus. The protein localises to the nucleus speckle. The protein resides in the chromosome. Functionally, dual function regulator of gene expression; regulator of transcription and modulator of alternative splicing. General coactivator of nuclear receptor-induced gene expression. This chain is Arginine and glutamate-rich protein 1-A (arglu1a), found in Danio rerio (Zebrafish).